Reading from the N-terminus, the 177-residue chain is Transcriptional repressor NrdR (177 aa).

The segment at 3–34 is a zinc-finger region; the sequence is CLFCQHTDTRVIDSRVSEDGATIRRRRECEAC. The 91-residue stretch at 49–139 folds into the ATP-cone domain; the sequence is PVIIKKDGGR…VYRSFQDVAD (91 aa).

The protein belongs to the NrdR family. It depends on Zn(2+) as a cofactor.

Its function is as follows. Negatively regulates transcription of bacterial ribonucleotide reductase nrd genes and operons by binding to NrdR-boxes. This chain is Transcriptional repressor NrdR, found in Xylella fastidiosa (strain M23).